A 138-amino-acid chain; its full sequence is Putative pre-16S rRNA nuclease (138 aa).

Belongs to the YqgF nuclease family.

Its subcellular location is the cytoplasm. Its function is as follows. Could be a nuclease involved in processing of the 5'-end of pre-16S rRNA. This chain is Putative pre-16S rRNA nuclease, found in Caldicellulosiruptor bescii (strain ATCC BAA-1888 / DSM 6725 / KCTC 15123 / Z-1320) (Anaerocellum thermophilum).